The primary structure comprises 451 residues: Trigger factor (451 aa).

In terms of domain architecture, PPIase FKBP-type spans 165–250 (DDKLTIDFEG…LHQIQAREAL (86 aa)).

The protein belongs to the FKBP-type PPIase family. Tig subfamily.

It localises to the cytoplasm. It catalyses the reaction [protein]-peptidylproline (omega=180) = [protein]-peptidylproline (omega=0). Involved in protein export. Acts as a chaperone by maintaining the newly synthesized protein in an open conformation. Functions as a peptidyl-prolyl cis-trans isomerase. The polypeptide is Trigger factor (Helicobacter pylori (strain HPAG1)).